Reading from the N-terminus, the 502-residue chain is 2,3-bisphosphoglycerate-independent phosphoglycerate mutase (502 aa).

Mn(2+)-binding residues include Asp12 and Ser62. The Phosphoserine intermediate role is filled by Ser62. Substrate contacts are provided by residues His123, 152–153 (RD), Arg183, Arg189, 255–258 (RPDR), and Lys329. The Mn(2+) site is built by Asp394, His398, Asp435, His436, and His453.

This sequence belongs to the BPG-independent phosphoglycerate mutase family. Monomer. The cofactor is Mn(2+).

It catalyses the reaction (2R)-2-phosphoglycerate = (2R)-3-phosphoglycerate. The protein operates within carbohydrate degradation; glycolysis; pyruvate from D-glyceraldehyde 3-phosphate: step 3/5. Its function is as follows. Catalyzes the interconversion of 2-phosphoglycerate and 3-phosphoglycerate. The chain is 2,3-bisphosphoglycerate-independent phosphoglycerate mutase from Malacoplasma penetrans (strain HF-2) (Mycoplasma penetrans).